Reading from the N-terminus, the 273-residue chain is Undecaprenyl-diphosphatase (273 aa).

7 helical membrane passes run 6-26 (SLLIAAILGVVEGLTEFLPVS), 45-65 (AKTFEVVIQLGSILAVVVMFW), 90-110 (LTLIHILLGMIPAVVLGLLFH), 116-136 (LFNPINVMYALVVGGLLLIAA), 190-210 (YAASEFSFLLAVPMMMGATAL), 222-242 (GDIPMFAVGFITAFVVALIAI), and 252-272 (ISFIPFAIYRFIVAAAVYVVF).

The protein belongs to the UppP family.

The protein resides in the cell inner membrane. The enzyme catalyses di-trans,octa-cis-undecaprenyl diphosphate + H2O = di-trans,octa-cis-undecaprenyl phosphate + phosphate + H(+). In terms of biological role, catalyzes the dephosphorylation of undecaprenyl diphosphate (UPP). Confers resistance to bacitracin. The chain is Undecaprenyl-diphosphatase from Escherichia coli O157:H7.